The sequence spans 631 residues: Bromodomain-containing protein 9 (631 aa).

Disordered stretches follow at residues 1 to 26 (MGKK…PLEK) and 39 to 116 (VTEL…TLPK). 2 stretches are compositionally biased toward basic and acidic residues: residues 9–26 (RPEW…PLEK) and 50–63 (SYYD…WERH). Basic residues predominate over residues 64 to 73 (KEKKKKKKKK). Positions 74-85 (SEKEKYADDDER) are enriched in basic and acidic residues. Over residues 86–96 (RRRKEEKKKKR) the composition is skewed to basic residues. A Bromo domain is found at 166–270 (NEATPHQQLL…HTGFKMMSKQ (105 aa)). The tract at residues 244–246 (VYN) is histone H4K5ac H4K8ac and histone H4K5bu H4K8bu binding. Residues 571–631 (ASVDRVGSRP…SPEPGSTANS (61 aa)) are disordered. Low complexity predominate over residues 581 to 590 (SSNLSSLSNA).

Binds acetylated histones H3 and H4. Binds butyrylated histone H4.

Its subcellular location is the nucleus. In terms of biological role, plays a role in chromatin remodeling and regulation of transcription. Acts as a chromatin reader that recognizes and binds acylated histones: binds histones that are acetylated and/or butyrylated. The sequence is that of Bromodomain-containing protein 9 (brd9) from Danio rerio (Zebrafish).